Consider the following 618-residue polypeptide: Crinkler effector protein 16 (618 aa).

Positions 1–19 (MVVVSLQCAIVGQAGSSFD) are cleaved as a signal peptide. The interval 18 to 57 (FDVEIDDGAKVSKLKDAIKAKKPNDFKVVDADKLHLFLAK) is LQLFLAK domain. Positions 58 to 139 (QPVEDESGKE…NMELPSSEQI (82 aa)) are DWL domain. Positions 140–146 (HVLVVVP) match the HVLVXXP motif motif. Asn-534 is a glycosylation site (N-linked (GlcNAc...) asparagine).

This sequence belongs to the Crinkler effector family.

The protein resides in the secreted. Its subcellular location is the host nucleus. Its function is as follows. Secreted effector that elicits necrosis in host plants, a characteristic of plant innate immunity. In Phytophthora infestans (Potato late blight agent), this protein is Crinkler effector protein 16.